The sequence spans 502 residues: UDP-N-acetylmuramoylalanine--D-glutamate ligase (502 aa).

136 to 142 (GTNGKTT) lines the ATP pocket.

This sequence belongs to the MurCDEF family.

It localises to the cytoplasm. The catalysed reaction is UDP-N-acetyl-alpha-D-muramoyl-L-alanine + D-glutamate + ATP = UDP-N-acetyl-alpha-D-muramoyl-L-alanyl-D-glutamate + ADP + phosphate + H(+). It functions in the pathway cell wall biogenesis; peptidoglycan biosynthesis. Cell wall formation. Catalyzes the addition of glutamate to the nucleotide precursor UDP-N-acetylmuramoyl-L-alanine (UMA). The chain is UDP-N-acetylmuramoylalanine--D-glutamate ligase from Corynebacterium jeikeium (strain K411).